A 484-amino-acid chain; its full sequence is GRIP domain-containing protein RUD3 (484 aa).

The segment covering 1–15 (MGKNKKKTGKKAKSH) has biased composition (basic residues). Residues 1 to 75 (MGKNKKKTGK…GVDKQKVNDG (75 aa)) form a disordered region. Over residues 16–30 (PHVEDVDETVNKPEE) the composition is skewed to basic and acidic residues. Phosphoserine occurs at positions 55 and 64. Residues 61 to 72 (KDLSEGVDKQKV) are compositionally biased toward basic and acidic residues. Residues 84 to 383 (LEDKKAGDEM…LQIGKLRHEA (300 aa)) adopt a coiled-coil conformation. In terms of domain architecture, GRIP spans 401 to 452 (SDSESVDKELISNLLISFVSIPRADPRKFEVLELLSNFLNWDEDKKQQAGLI). Phosphoserine is present on S468.

The protein resides in the golgi apparatus lumen. In terms of biological role, involved in the structural organization of the cis-Golgi and in vesicle targeting/fusion stages of ER to Golgi transport. This is GRIP domain-containing protein RUD3 (RUD3) from Saccharomyces cerevisiae (strain ATCC 204508 / S288c) (Baker's yeast).